Consider the following 251-residue polypeptide: Blue-light absorbing proteorhodopsin (251 aa).

A signal peptide spans 1-18 (MGKLLLILGSAIALPSFA). Helical transmembrane passes span 30–50 (VGVS…FFFV), 65–85 (VSGL…GVWI), 97–117 (IDWL…LAAC), 120–140 (VAAS…GAGF), 144–164 (AGLA…LYMI), 190–210 (MMMI…AGYL), and 223–243 (LIYN…IWNV). Lys-233 is subject to N6-(retinylidene)lysine.

It belongs to the archaeal/bacterial/fungal opsin family. Contains one covalently linked retinal chromophore.

The protein localises to the cell membrane. Its function is as follows. Light-driven proton pump. May have a regulatory rather than energy harvesting function, based on light-induced opening of proton channels, to modulate cell physiology depending on light intensity variations. Could be, therefore, a sensory rhodopsin, potentially associated with a transducer component. This Gamma-proteobacterium Hot 75m4 protein is Blue-light absorbing proteorhodopsin.